The following is a 322-amino-acid chain: MTASPSKLAQLRDLSVVVADTGDYDAIKRLKPVDCTTNPTLVKKALDLPVYADLIERELAWGRAHGGEDRNSTINEVADRLTVGVGTMLSELVPGRVSTEVDADLAHDTQATIAKARKFIAMYAERGVSKDKILIKIAATWEGIEAARQLQQEGIDCNLTLIFNRSQALACAEAGVFLISPFVGRILDFFVAKGQTPASIDEDPGVVFVRGVYDEFKRRGSSTVVMGASFRSTAQIEALAGCDRLTISPDLLEKLDADHGDLPRKLSPLNADNAAITPINSDSFATDLAADDMATEKLASGIDTFAKDLEALRKTIADKLAG.

Lys-136 acts as the Schiff-base intermediate with substrate in catalysis.

Belongs to the transaldolase family. Type 1 subfamily. In terms of assembly, homodimer.

The protein localises to the cytoplasm. The enzyme catalyses D-sedoheptulose 7-phosphate + D-glyceraldehyde 3-phosphate = D-erythrose 4-phosphate + beta-D-fructose 6-phosphate. Its pathway is carbohydrate degradation; pentose phosphate pathway; D-glyceraldehyde 3-phosphate and beta-D-fructose 6-phosphate from D-ribose 5-phosphate and D-xylulose 5-phosphate (non-oxidative stage): step 2/3. In terms of biological role, transaldolase is important for the balance of metabolites in the pentose-phosphate pathway. This Xanthomonas campestris pv. campestris (strain B100) protein is Transaldolase.